We begin with the raw amino-acid sequence, 89 residues long: Small ribosomal subunit protein uS19 (89 aa).

The protein belongs to the universal ribosomal protein uS19 family.

In terms of biological role, protein S19 forms a complex with S13 that binds strongly to the 16S ribosomal RNA. This chain is Small ribosomal subunit protein uS19, found in Stenotrophomonas maltophilia (strain K279a).